The sequence spans 524 residues: Keratin, type II cytoskeletal 71 (524 aa).

Positions 1–130 (MNRQFTCKSG…DPEIQKVRAQ (130 aa)) are head. Positions 131–166 (EREQIKALNNKFASFIDKVRFLEQQNQVLETKWELL) are coil 1A. The IF rod domain maps to 131–444 (EREQIKALNN…KLLESEECRM (314 aa)). The tract at residues 167-185 (QQLDLNNCKNNLEPILEGY) is linker 1. Residues 186 to 277 (ISNLRKQLET…CLYEAEIAQI (92 aa)) form a coil 1B region. The linker 12 stretch occupies residues 278-301 (QSHISDMSVILSMDNNRDLNLDSI). The tract at residues 302 to 440 (IDEVRAQYEE…ATYRKLLESE (139 aa)) is coil 2. The tail stretch occupies residues 441-524 (ECRMSGEFPS…QSASSKKASR (84 aa)). The tract at residues 491–524 (VRGGEGRSRGSTSDYKDTLGKGSSQSASSKKASR) is disordered. The span at 494 to 509 (GEGRSRGSTSDYKDTL) shows a compositional bias: basic and acidic residues. Low complexity predominate over residues 510 to 524 (GKGSSQSASSKKASR).

This sequence belongs to the intermediate filament family. In terms of assembly, heterodimer of a type I and a type II keratin. Associates with KRT16 and/or KRT17.

Its subcellular location is the cytoplasm. It is found in the cytoskeleton. Its function is as follows. Plays a central role in hair formation. Essential component of keratin intermediate filaments in the inner root sheath (IRS) of the hair follicle. This is Keratin, type II cytoskeletal 71 (KRT71) from Felis catus (Cat).